Reading from the N-terminus, the 964-residue chain is Translation initiation factor IF-2 (964 aa).

Positions 35-353 are disordered; that stretch reads ASSTIEPPVV…RQKRNEYESM (319 aa). A compositionally biased stretch (low complexity) spans 64–108; that stretch reads KPTPAKPAAKPGAPAPKPGTAQKPTAPTPGAVAAPKPGTAAAKPT. Residues 124 to 133 are compositionally biased toward pro residues; the sequence is PAKPTAPKPA. The span at 145–155 shows a compositional bias: basic and acidic residues; it reads AAKKAAEDKAT. A compositionally biased stretch (pro residues) spans 166 to 178; sequence NAMPRPMAKPGPK. Low complexity predominate over residues 220–233; it reads PRPQGGQRSGAPRD. 2 stretches are compositionally biased toward gly residues: residues 234–252 and 290–333; these read GQGGPRGQRPGPGSGGPRP and GKGG…GRPG. The span at 337 to 346 shows a compositional bias: basic residues; that stretch reads RRGRKSKRQK. The tr-type G domain occupies 459 to 631; that stretch reads KRPPVVTVMG…VCLTADAELD (173 aa). A G1 region spans residues 468–475; it reads GHVDHGKT. A GTP-binding site is contributed by 468-475; it reads GHVDHGKT. The segment at 493–497 is G2; it reads GITQG. The G3 stretch occupies residues 518–521; sequence DTPG. Residues 518–522 and 572–575 contribute to the GTP site; these read DTPGH and NKID. The G4 stretch occupies residues 572-575; it reads NKID. The G5 stretch occupies residues 608–610; the sequence is SAK.

This sequence belongs to the TRAFAC class translation factor GTPase superfamily. Classic translation factor GTPase family. IF-2 subfamily.

It localises to the cytoplasm. In terms of biological role, one of the essential components for the initiation of protein synthesis. Protects formylmethionyl-tRNA from spontaneous hydrolysis and promotes its binding to the 30S ribosomal subunits. Also involved in the hydrolysis of GTP during the formation of the 70S ribosomal complex. This is Translation initiation factor IF-2 from Corynebacterium efficiens (strain DSM 44549 / YS-314 / AJ 12310 / JCM 11189 / NBRC 100395).